The primary structure comprises 235 residues: Phosphoribosylaminoimidazole-succinocarboxamide synthase (235 aa).

This sequence belongs to the SAICAR synthetase family.

It catalyses the reaction 5-amino-1-(5-phospho-D-ribosyl)imidazole-4-carboxylate + L-aspartate + ATP = (2S)-2-[5-amino-1-(5-phospho-beta-D-ribosyl)imidazole-4-carboxamido]succinate + ADP + phosphate + 2 H(+). It functions in the pathway purine metabolism; IMP biosynthesis via de novo pathway; 5-amino-1-(5-phospho-D-ribosyl)imidazole-4-carboxamide from 5-amino-1-(5-phospho-D-ribosyl)imidazole-4-carboxylate: step 1/2. The polypeptide is Phosphoribosylaminoimidazole-succinocarboxamide synthase (Chloroherpeton thalassium (strain ATCC 35110 / GB-78)).